Reading from the N-terminus, the 405-residue chain is L-carnitine CoA-transferase (405 aa).

CoA contacts are provided by Lys97 and Arg104. The active-site Nucleophile is the Asp169.

This sequence belongs to the CoA-transferase III family. CaiB subfamily. As to quaternary structure, homodimer.

Its subcellular location is the cytoplasm. It carries out the reaction crotonobetainyl-CoA + (R)-carnitine = crotonobetaine + (R)-carnitinyl-CoA. It catalyses the reaction 4-(trimethylamino)butanoyl-CoA + (R)-carnitine = (R)-carnitinyl-CoA + 4-(trimethylamino)butanoate. Its pathway is amine and polyamine metabolism; carnitine metabolism. In terms of biological role, catalyzes the reversible transfer of the CoA moiety from gamma-butyrobetainyl-CoA to L-carnitine to generate L-carnitinyl-CoA and gamma-butyrobetaine. Is also able to catalyze the reversible transfer of the CoA moiety from gamma-butyrobetainyl-CoA or L-carnitinyl-CoA to crotonobetaine to generate crotonobetainyl-CoA. This Escherichia coli O127:H6 (strain E2348/69 / EPEC) protein is L-carnitine CoA-transferase.